Here is a 94-residue protein sequence, read N- to C-terminus: Selenoprotein K (94 aa).

A helical membrane pass occupies residues 20–42 (LSFITDFFWGIAEFVVFFFKTLL). The segment at 48–94 (KRRGYGGSSDSRYDDGRGPPGNPPRRMGRISHLRGPSPPPMAGGUGR) is disordered. Position 92 (Sec-92) is a non-standard amino acid, selenocysteine.

Belongs to the selenoprotein K family. As to quaternary structure, interacts with DERL1, DERL2, DERL3 and SELENOS. The SELENOK-SELENOS complex interacts with VCP. Interacts with ZDHHC6. In terms of processing, cleaved by CAPN2/m-calpain in resting macrophages but not in activated macrophages. Macrophage activation up-regulates expression of the calpain inhibitor CAST/calpastatin, resulting in inhibition of CAPN2 activity. Post-translationally, truncated SELENOK proteins produced by failed UGA/Sec decoding are ubiquitinated by the CRL2(KLHDC2) complex, which recognizes the diglycine (Gly-Gly) at the C-terminus of truncated SELENOK proteins.

It localises to the endoplasmic reticulum membrane. Its subcellular location is the cell membrane. Its function is as follows. Required for Ca(2+) flux in immune cells and plays a role in T-cell proliferation and in T-cell and neutrophil migration. Involved in endoplasmic reticulum-associated degradation (ERAD) of soluble glycosylated proteins. Required for palmitoylation and cell surface expression of CD36 and involved in macrophage uptake of low-density lipoprotein and in foam cell formation. Together with ZDHHC6, required for palmitoylation of ITPR1 in immune cells, leading to regulate ITPR1 stability and function. Plays a role in protection of cells from ER stress-induced apoptosis. Protects cells from oxidative stress when overexpressed in cardiomyocytes. This Rattus norvegicus (Rat) protein is Selenoprotein K.